The sequence spans 439 residues: Ribosomal protein uS12 methylthiotransferase RimO (439 aa).

Positions 3 to 113 constitute an MTTase N-terminal domain; the sequence is HKVGFVSLGC…VVNAVHQHLP (111 aa). Cysteine 12, cysteine 48, cysteine 77, cysteine 144, cysteine 148, and cysteine 151 together coordinate [4Fe-4S] cluster. A Radical SAM core domain is found at 130-367; the sequence is LTPRHYAYLK…MQVQAEISRN (238 aa). The 67-residue stretch at 370-436 folds into the TRAM domain; it reads KNKIGSTQTV…DYDLYGDLEY (67 aa).

This sequence belongs to the methylthiotransferase family. RimO subfamily. [4Fe-4S] cluster is required as a cofactor.

The protein resides in the cytoplasm. The enzyme catalyses L-aspartate(89)-[ribosomal protein uS12]-hydrogen + (sulfur carrier)-SH + AH2 + 2 S-adenosyl-L-methionine = 3-methylsulfanyl-L-aspartate(89)-[ribosomal protein uS12]-hydrogen + (sulfur carrier)-H + 5'-deoxyadenosine + L-methionine + A + S-adenosyl-L-homocysteine + 2 H(+). Functionally, catalyzes the methylthiolation of an aspartic acid residue of ribosomal protein uS12. The polypeptide is Ribosomal protein uS12 methylthiotransferase RimO (Legionella pneumophila (strain Paris)).